Here is a 451-residue protein sequence, read N- to C-terminus: GTPase Der (451 aa).

EngA-type G domains follow at residues 5-170 and 186-359; these read PVVA…VEPE and IKLA…AAAF. GTP is bound by residues 11-18, 58-62, 122-125, 192-199, 239-243, and 304-307; these read GRPNVGKS, DTGGF, NKAE, DTAGL, and NKWD. Residues 360 to 444 form the KH-like domain; the sequence is AKLSTPKLTR…PLRIEFKSSR (85 aa).

Belongs to the TRAFAC class TrmE-Era-EngA-EngB-Septin-like GTPase superfamily. EngA (Der) GTPase family. Associates with the 50S ribosomal subunit.

Functionally, GTPase that plays an essential role in the late steps of ribosome biogenesis. In Bordetella petrii (strain ATCC BAA-461 / DSM 12804 / CCUG 43448), this protein is GTPase Der.